The primary structure comprises 357 residues: Major outer membrane protein P.IB (357 aa).

The signal sequence occupies residues 1–19 (MKKSLIALTLAALPVAAMA).

This sequence belongs to the Gram-negative porin family. As to quaternary structure, homotrimer.

The protein resides in the cell outer membrane. Its function is as follows. Serves as a slightly cation selective porin. In Neisseria sicca, this protein is Major outer membrane protein P.IB (por).